The sequence spans 571 residues: Adenine deaminase (571 aa).

It belongs to the metallo-dependent hydrolases superfamily. Adenine deaminase family. The cofactor is Mn(2+).

The catalysed reaction is adenine + H2O + H(+) = hypoxanthine + NH4(+). The protein is Adenine deaminase of Dehalococcoides mccartyi (strain CBDB1).